The chain runs to 1427 residues: Coiled-coil domain-containing protein 144A (1427 aa).

The segment covering 1 to 11 (MASWGGEKRGG) has biased composition (basic and acidic residues). Disordered stretches follow at residues 1 to 32 (MASW…VGSQ), 87 to 189 (AARS…LTER), 213 to 261 (LPEN…CDRE), 453 to 485 (NMNQ…DSDR), and 528 to 586 (EEEM…EVKN). Composition is skewed to polar residues over residues 129-150 (PESL…LSDE) and 167-178 (VSPSMPENQSAT). Residues 224–234 (QDSELTSEEEQ) are compositionally biased toward acidic residues. Residues 453–467 (NMNQNSDSGSTNNYK) show a composition bias toward polar residues. The stretch at 490 to 545 (YLHEELQQDMQKFKNEVNTLEEEFLALKKEDVQLHKDVEEEMEKHRSNSTELSGTL) forms a coiled coil. The span at 528 to 537 (EEEMEKHRSN) shows a compositional bias: basic and acidic residues. Low complexity predominate over residues 543–552 (GTLTDGTTVG). The span at 563–584 (PRKENGEHDRPADKTSNEKNEV) shows a compositional bias: basic and acidic residues. Coiled-coil stretches lie at residues 648-1129 (LLKL…DLTE) and 1155-1309 (FSMK…TQLT).

The protein belongs to the CCDC144 family.

Its function is as follows. May play a role in preventing the formation of kidney stones through inhibition of calcium oxalate monohydrate (COM) crystallization, attenuating COM-induced apoptotic injury to renal epithelial cells. May exhibit antilithiatic (preventing the formation of kidney stones) activity through crystal binding, hindering the crystal attachment to renal epithelial cells, a pre-requisite to initiate inflammatory response. In Homo sapiens (Human), this protein is Coiled-coil domain-containing protein 144A (CCDC144A).